Consider the following 611-residue polypeptide: MLLSAIASQTLLSSNPNLHFSNSIPNPRPSNPSLKLLNASSSSSSSSSSSIFTRGLRYVNHTVSNEESEPGGGETMVASASAIASAIRGASTTPVEFTQMIEKDHLKTKIILPSPDFQRLCLEQLDLFRQIVDPNAVLSIYVRPAGSYVMDRLELRRVTCYPSVNAGDVVILVGNFGIPAGLRAAEASLSSQQVELVSKHRAAVFPMVKHPFVVGFLVAELPVEAEEEEEEEEEEKPHGVNQFLSPEEAYALPASANTKSPRVKLPSVKVFTEEQRSYAINISRTLAMAYVMDQKTMLLQQSSWQNNVRMSKLVEQIRGPLSTMRTLSKMLSTHTKRNQISHDIVEDLIVQGDQIKDTLEELQDAVHLTKANIVRHNEEALKKINKTHNETRRSKYEHKDPIDGSQISSTRLSLGSGLDDSEMPMPPLALAPLQMHSIRPCDISNVLLDMVETVRPLALTQQRVVELGENSASLQVAVEEPALRQALSNLIEGALLRTHVGGKVEILSTRAPAGGSLVVIDDDGPDMRYMTQMHSLTPFGAELLSENMVEDNMTWNFVAGLTVAREILESYGCVIRVISPRSSDAALGAGGTRVELWLPAFPAAVSEANEA.

Residues 1 to 79 (MLLSAIASQT…PGGGETMVAS (79 aa)) constitute a chloroplast transit peptide. A disordered region spans residues 17–50 (NLHFSNSIPNPRPSNPSLKLLNASSSSSSSSSSS). Residues 40–50 (SSSSSSSSSSS) are compositionally biased toward low complexity. A GAF region spans residues 116 to 300 (DFQRLCLEQL…VMDQKTMLLQ (185 aa)). A [3Fe-4S] cluster-binding site is contributed by C121. S188 bears the Phosphoserine mark. One can recognise a Histidine kinase domain in the interval 312 to 602 (KLVEQIRGPL…RVELWLPAFP (291 aa)). Residues 345-380 (VEDLIVQGDQIKDTLEELQDAVHLTKANIVRHNEEA) are a coiled coil. Residues 385–402 (NKTHNETRRSKYEHKDPI) show a composition bias toward basic and acidic residues. The disordered stretch occupies residues 385-420 (NKTHNETRRSKYEHKDPIDGSQISSTRLSLGSGLDD).

The protein belongs to the chloroplast sensor kinase protein family. In terms of assembly, self-interacts. Interacts with the plastoquinone analog 2,5-dibromo-3-methyl-5-isopropyl-p-benzoquinone (DBMIB) and with SIGA/SIG1. It depends on [3Fe-4S] cluster as a cofactor. In terms of processing, autophosphorylated, possibly on tyrosine residues, in photosystem I (PS I) light and in the presence of manganese ions Mn(2+), to a lesser degree, in the presence of calcium ions Ca(2+), but not in the presence of magnesium ions Mg(2+). Dithiothreitol (DTT) stimulates autophosphorylation. Phosphorylated on Ser-188 in vivo after exposure to far-red light (when plastoquinone (PQ) is oxidized). Not phosphorylated under orange light (reduces PQ).

It is found in the plastid. The protein localises to the chloroplast stroma. The enzyme catalyses L-tyrosyl-[protein] + ATP = O-phospho-L-tyrosyl-[protein] + ADP + H(+). Functionally, sensor kinase that senses the plastoquinone (PQ) redox state involved in stoichiometry adjustment of both photosystems (e.g. long-term adaptation via transcriptional regulation of reaction center genes of photosystems I and II) and state transitions (e.g. short-term adaptation involving reversible post-translational phosphorylation of light-harvesting complex II, LHC II), thus linking photosynthesis with gene expression in chloroplasts. Autophosphorylates, probably on a tyrosine residue. Probably phosphorylates SIGA/SIG1 in response to plastoquinone redox state modification. Reduced PQ suppresses its autophosphorylation activity. Represses expression of a number of chloroplast-encoded genes. This is Chloroplast sensor kinase, chloroplastic from Arabidopsis thaliana (Mouse-ear cress).